The sequence spans 318 residues: Replication factor C small subunit (318 aa).

Residue 43–50 participates in ATP binding; sequence GSVGTGKT.

Belongs to the activator 1 small subunits family. RfcS subfamily. As to quaternary structure, heteromultimer composed of small subunits (RfcS) and large subunits (RfcL).

Part of the RFC clamp loader complex which loads the PCNA sliding clamp onto DNA. In Thermoplasma acidophilum (strain ATCC 25905 / DSM 1728 / JCM 9062 / NBRC 15155 / AMRC-C165), this protein is Replication factor C small subunit.